Consider the following 175-residue polypeptide: Probable coatomer subunit zeta-A (175 aa).

This sequence belongs to the adaptor complexes small subunit family. In terms of assembly, oligomeric complex that consists of at least the alpha, beta, beta', gamma, delta, epsilon and zeta subunits.

It localises to the cytoplasm. It is found in the golgi apparatus membrane. The protein resides in the cytoplasmic vesicle. Its subcellular location is the COPI-coated vesicle membrane. Functionally, the coatomer is a cytosolic protein complex that binds to dilysine motifs and reversibly associates with Golgi non-clathrin-coated vesicles, which further mediate biosynthetic protein transport from the ER, via the Golgi up to the trans Golgi network. Coatomer complex is required for budding from Golgi membranes, and is essential for the retrograde Golgi-to-ER transport of dilysine-tagged proteins. The zeta subunit may be involved in regulating the coat assembly and, hence, the rate of biosynthetic protein transport due to its association-dissociation properties with the coatomer complex. This is Probable coatomer subunit zeta-A (copZa) from Dictyostelium discoideum (Social amoeba).